The sequence spans 98 residues: UPF0251 protein Sputw3181_3483 (98 aa).

This sequence belongs to the UPF0251 family.

This chain is UPF0251 protein Sputw3181_3483, found in Shewanella sp. (strain W3-18-1).